The chain runs to 505 residues: DEAD-box ATP-dependent RNA helicase 8 (505 aa).

A disordered region spans residues Met1 to Gly85. A compositionally biased stretch (polar residues) spans Pro20–Gln31. Over residues Asn43–Gln71 the composition is skewed to low complexity. Residues Asn131–Glu159 carry the Q motif motif. Residues Ile162–Ile332 form the Helicase ATP-binding domain. An ATP-binding site is contributed by Ala175–Thr182. Thr237 carries the post-translational modification Phosphothreonine. The short motif at Asp280–Asp283 is the DEAD box element. The region spanning Gly342–Ile502 is the Helicase C-terminal domain.

Belongs to the DEAD box helicase family. DDX6/DHH1 subfamily.

The protein localises to the cytoplasm. Its subcellular location is the P-body. It catalyses the reaction ATP + H2O = ADP + phosphate + H(+). ATP-dependent RNA helicase involved in mRNA turnover, and more specifically in mRNA decapping. The chain is DEAD-box ATP-dependent RNA helicase 8 (RH8) from Arabidopsis thaliana (Mouse-ear cress).